The chain runs to 449 residues: Sulfite exporter TauE/SafE family protein 5 (449 aa).

Helical transmembrane passes span 1-21 (MKTL…NANQ), 57-77 (AIIM…AGGI), 78-98 (GGGG…LKTA), 101-121 (FSAF…LFGG), 127-147 (YDLA…GVIC), 150-170 (VLPE…SSLK), 224-244 (IPWT…VIYL), 259-279 (PCGV…LIFT), 315-335 (AMSF…GMLI), 353-373 (TSFM…LLGM), 378-398 (TAYV…VLVQ), and 409-429 (IIVF…TSFG).

It belongs to the 4-toluene sulfonate uptake permease (TSUP) (TC 2.A.102) family.

Its subcellular location is the membrane. In Arabidopsis thaliana (Mouse-ear cress), this protein is Sulfite exporter TauE/SafE family protein 5.